The following is a 40-amino-acid chain: Large ribosomal subunit protein bL36 (40 aa).

This sequence belongs to the bacterial ribosomal protein bL36 family.

In Corynebacterium jeikeium (strain K411), this protein is Large ribosomal subunit protein bL36.